We begin with the raw amino-acid sequence, 142 residues long: Hemoglobin subunit alpha-2 (142 aa).

Residues 2–142 form the Globin domain; it reads VLSAADKSNV…VSTVLTSKYR (141 aa). His59 is a binding site for O2. His88 lines the heme b pocket.

Belongs to the globin family. As to quaternary structure, heterotetramer of two alpha chains and two beta chains.

Functionally, involved in oxygen transport from the lung to the various peripheral tissues. Hemopressin acts as an antagonist peptide of the cannabinoid receptor CNR1. Hemopressin-binding efficiently blocks cannabinoid receptor CNR1 and subsequent signaling. The protein is Hemoglobin subunit alpha-2 (HBA2) of Capra hircus (Goat).